Reading from the N-terminus, the 455-residue chain is Single-stranded DNA-binding protein homolog sam-10 (455 aa).

Positions 19–51 (ARDRLTSYIYEYLQQTGASKTAETFKEEVLSTN) constitute a LisH domain. 4 disordered regions span residues 217–249 (PPPG…LNSP), 281–302 (SDHQ…TAGG), 314–343 (GPGS…HQPK), and 357–442 (EALT…NGEI). 2 stretches are compositionally biased toward low complexity: residues 288–298 (AGPAAAAPGAT) and 321–336 (VATT…SSIG). Over residues 396–406 (HSVNNNVNPGT) the composition is skewed to polar residues. Low complexity predominate over residues 407-421 (PGSNPLSNPMSNPPL).

Ubiquitously expressed with higher expression in the head and tail ganglia, the vulva and PLM neurons.

It localises to the cytoplasm. The protein resides in the nucleus. In terms of biological role, involved cell autonomously in PLM neuron pre-synaptic differentiation by negatively regulating prk-2 expression and in neurite branch positioning. The sequence is that of Single-stranded DNA-binding protein homolog sam-10 from Caenorhabditis elegans.